The primary structure comprises 216 residues: Somatotropin (216 aa).

An N-terminal signal peptide occupies residues 1–26 (MAAGPRNSMLLVFALLSLPWPQEVGA). Position 45 (His45) interacts with Zn(2+). Cys78 and Cys189 are oxidised to a cystine. Phosphoserine is present on Ser131. Glu198 is a binding site for Zn(2+). A disulfide bridge connects residues Cys206 and Cys214.

The protein belongs to the somatotropin/prolactin family.

The protein resides in the secreted. Its function is as follows. Plays an important role in growth control. Its major role in stimulating body growth is to stimulate the liver and other tissues to secrete IGF1. It stimulates both the differentiation and proliferation of myoblasts. It also stimulates amino acid uptake and protein synthesis in muscle and other tissues. This is Somatotropin (GH1) from Neovison vison (American mink).